Consider the following 860-residue polypeptide: Semaphorin-3aa (860 aa).

The signal sequence occupies residues methionine 1–proline 17. The 485-residue stretch at arginine 31–leucine 515 folds into the Sema domain. Asparagine 53 carries N-linked (GlcNAc...) asparagine glycosylation. A disulfide bridge connects residues cysteine 104 and cysteine 115. An N-linked (GlcNAc...) asparagine glycan is attached at asparagine 126. Intrachain disulfides connect cysteine 133–cysteine 142, cysteine 270–cysteine 382, cysteine 294–cysteine 342, and cysteine 518–cysteine 536. The Ig-like C2-type domain maps to glycine 579–leucine 668. Asparagine 593 carries N-linked (GlcNAc...) asparagine glycosylation. An intrachain disulfide couples cysteine 652 to cysteine 717. The disordered stretch occupies residues lysine 725–valine 860. Polar residues-rich tracts occupy residues threonine 748–glutamine 764 and threonine 782–glutamine 818. A compositionally biased stretch (basic and acidic residues) spans glutamine 838–valine 860.

It belongs to the semaphorin family.

It is found in the secreted. In terms of biological role, may influence outgrowth by a variety of growth cones including those of the posterior lateral line ganglion. The polypeptide is Semaphorin-3aa (sema3aa) (Danio rerio (Zebrafish)).